A 203-amino-acid polypeptide reads, in one-letter code: Holliday junction branch migration complex subunit RuvA (203 aa).

The tract at residues 1–63 is domain I; sequence MYEYLKGLVT…DTDITLFGFY (63 aa). A domain II region spans residues 64–142; sequence DLDEKQLFQK…DLEQSATLVG (79 aa). The segment at 143–153 is flexible linker; the sequence is QTAIDLGSQGD. The interval 153-203 is domain III; the sequence is DSPELSDALAALSALGYSAREVKAITPKLTDFAAQTTDQYLREGLRLLMKK.

The protein belongs to the RuvA family. In terms of assembly, homotetramer. Forms an RuvA(8)-RuvB(12)-Holliday junction (HJ) complex. HJ DNA is sandwiched between 2 RuvA tetramers; dsDNA enters through RuvA and exits via RuvB. An RuvB hexamer assembles on each DNA strand where it exits the tetramer. Each RuvB hexamer is contacted by two RuvA subunits (via domain III) on 2 adjacent RuvB subunits; this complex drives branch migration. In the full resolvosome a probable DNA-RuvA(4)-RuvB(12)-RuvC(2) complex forms which resolves the HJ.

The protein localises to the cytoplasm. In terms of biological role, the RuvA-RuvB-RuvC complex processes Holliday junction (HJ) DNA during genetic recombination and DNA repair, while the RuvA-RuvB complex plays an important role in the rescue of blocked DNA replication forks via replication fork reversal (RFR). RuvA specifically binds to HJ cruciform DNA, conferring on it an open structure. The RuvB hexamer acts as an ATP-dependent pump, pulling dsDNA into and through the RuvAB complex. HJ branch migration allows RuvC to scan DNA until it finds its consensus sequence, where it cleaves and resolves the cruciform DNA. The sequence is that of Holliday junction branch migration complex subunit RuvA from Latilactobacillus sakei subsp. sakei (strain 23K) (Lactobacillus sakei subsp. sakei).